Reading from the N-terminus, the 343-residue chain is 3-dehydroquinate synthase (343 aa).

NAD(+) is bound by residues 61–66 (SGEKYK), 95–99 (GVISD), 119–120 (TT), Lys-132, Lys-141, and 159–162 (FLKT). The Zn(2+) site is built by Glu-174, His-231, and His-248.

This sequence belongs to the sugar phosphate cyclases superfamily. Dehydroquinate synthase family. The cofactor is NAD(+). Co(2+) serves as cofactor. Zn(2+) is required as a cofactor.

It localises to the cytoplasm. It catalyses the reaction 7-phospho-2-dehydro-3-deoxy-D-arabino-heptonate = 3-dehydroquinate + phosphate. The protein operates within metabolic intermediate biosynthesis; chorismate biosynthesis; chorismate from D-erythrose 4-phosphate and phosphoenolpyruvate: step 2/7. Functionally, catalyzes the conversion of 3-deoxy-D-arabino-heptulosonate 7-phosphate (DAHP) to dehydroquinate (DHQ). The chain is 3-dehydroquinate synthase from Helicobacter pylori (strain J99 / ATCC 700824) (Campylobacter pylori J99).